We begin with the raw amino-acid sequence, 134 residues long: Large ribosomal subunit protein uL18 (134 aa).

The interval 1 to 25 (MSNTAQNEKRLPVGKDISTRRRTAR) is disordered. Positions 7-19 (NEKRLPVGKDIST) are enriched in basic and acidic residues.

Belongs to the universal ribosomal protein uL18 family. As to quaternary structure, part of the 50S ribosomal subunit; part of the 5S rRNA/L5/L18/L25 subcomplex. Contacts the 5S and 23S rRNAs.

Its function is as follows. This is one of the proteins that bind and probably mediate the attachment of the 5S RNA into the large ribosomal subunit, where it forms part of the central protuberance. The protein is Large ribosomal subunit protein uL18 of Corynebacterium jeikeium (strain K411).